The primary structure comprises 303 residues: Taste receptor type 2 member 13 (303 aa).

Over 1-7 (MKSALPS) the chain is Extracellular. Residues 8 to 28 (IFTLVIIAEFIIGNLSNGFIV) form a helical membrane-spanning segment. At 29–55 (LINCIDWVSKRELSSVDKLLIILAISR) the chain is on the cytoplasmic side. The chain crosses the membrane as a helical span at residues 56–76 (IGLIWEILVSWFLALHYLAIF). Topologically, residues 77–85 (VSGTGLRIM) are extracellular. A helical membrane pass occupies residues 86 to 106 (IFSWIVSNHFNLWLATILSIF). Residues 107–128 (YLLKIASFSSPAFLYLKWRVNK) are Cytoplasmic-facing. Residues 129–149 (VILLILLGTLVFLFLNLIQIN) traverse the membrane as a helical segment. Topologically, residues 150–184 (MHIKDWLDRYERNTTWNFSMSDFETFSVSVKFTMT) are extracellular. 2 N-linked (GlcNAc...) asparagine glycosylation sites follow: N162 and N166. Residues 185–205 (MFSLTPFTVAFISFLLLIFSL) form a helical membrane-spanning segment. The Cytoplasmic portion of the chain corresponds to 206–232 (QKHLQKMQLNYKGHRDPKTKVHTNALK). Residues 233 to 253 (IVISFLLFYASFFLCVLXSWI) form a helical membrane-spanning segment. Residues 254-261 (SELYQNTV) are Extracellular-facing. A helical membrane pass occupies residues 262–282 (IYMLCETIGVFYPSSHSFLLI). Residues 283–303 (LGNAKLRQAFLLVAAKVWAKR) are Cytoplasmic-facing.

Belongs to the G-protein coupled receptor T2R family.

It localises to the membrane. Receptor that may play a role in the perception of bitterness and is gustducin-linked. May play a role in sensing the chemical composition of the gastrointestinal content. The activity of this receptor may stimulate alpha gustducin, mediate PLC-beta-2 activation and lead to the gating of TRPM5. This chain is Taste receptor type 2 member 13 (TAS2R13), found in Gorilla gorilla gorilla (Western lowland gorilla).